The following is a 262-amino-acid chain: Acyl-[acyl-carrier-protein]--UDP-N-acetylglucosamine O-acyltransferase (262 aa).

It belongs to the transferase hexapeptide repeat family. LpxA subfamily. Homotrimer.

It localises to the cytoplasm. It carries out the reaction a (3R)-hydroxyacyl-[ACP] + UDP-N-acetyl-alpha-D-glucosamine = a UDP-3-O-[(3R)-3-hydroxyacyl]-N-acetyl-alpha-D-glucosamine + holo-[ACP]. The protein operates within glycolipid biosynthesis; lipid IV(A) biosynthesis; lipid IV(A) from (3R)-3-hydroxytetradecanoyl-[acyl-carrier-protein] and UDP-N-acetyl-alpha-D-glucosamine: step 1/6. Functionally, involved in the biosynthesis of lipid A, a phosphorylated glycolipid that anchors the lipopolysaccharide to the outer membrane of the cell. The sequence is that of Acyl-[acyl-carrier-protein]--UDP-N-acetylglucosamine O-acyltransferase from Burkholderia orbicola (strain MC0-3).